Here is a 232-residue protein sequence, read N- to C-terminus: Ribonuclease P protein component 3 (232 aa).

The protein belongs to the eukaryotic/archaeal RNase P protein component 3 family. Consists of a catalytic RNA component and at least 4-5 protein subunits.

The protein localises to the cytoplasm. The enzyme catalyses Endonucleolytic cleavage of RNA, removing 5'-extranucleotides from tRNA precursor.. In terms of biological role, part of ribonuclease P, a protein complex that generates mature tRNA molecules by cleaving their 5'-ends. The chain is Ribonuclease P protein component 3 from Methanococcus maripaludis (strain C7 / ATCC BAA-1331).